The primary structure comprises 841 residues: MAP7 domain-containing protein 1 (841 aa).

2 disordered regions span residues 1–151 (MESG…ERAK) and 184–208 (EQRLKAEQRRAALEERQRQKLEKNK). Residues 22-52 (PPEPRPSPEGDPSPPPPPMSALVPDTPPDTP) show a composition bias toward pro residues. Phosphothreonine is present on residues Thr47 and Thr51. A phosphoserine mark is found at Ser70, Ser86, and Ser93. Thr97 bears the Phosphothreonine mark. A phosphoserine mark is found at Ser113 and Ser116. A Phosphothreonine modification is found at Thr118. Phosphoserine is present on residues Ser123 and Ser125. A coiled-coil region spans residues 128 to 222 (TKQEVKKAGE…AAIQRSVKKT (95 aa)). Basic and acidic residues predominate over residues 130 to 151 (QEVKKAGERHKLAKERREERAK). A phosphoserine mark is found at Ser254, Ser273, Ser313, Ser366, and Ser399. Positions 316–813 (TLPRNGRDQG…PSGDKSLSRT (498 aa)) are disordered. The span at 365–377 (ASASPLTPCSVTR) shows a compositional bias: polar residues. Basic and acidic residues predominate over residues 405–435 (RRPEASPVQKKEKKDKERENEKEKSALARER). Positions 412 to 441 (VQKKEKKDKERENEKEKSALARERSLKKRQ) form a coiled coil. 5 positions are modified to phosphoserine: Ser442, Ser446, Ser452, Ser454, and Ser460. A compositionally biased stretch (low complexity) spans 460 to 473 (SPKSKARPSSPSTS). A Glycyl lysine isopeptide (Lys-Gly) (interchain with G-Cter in SUMO2) cross-link involves residue Lys462. Residues Ser479 and Ser496 each carry the phosphoserine modification. A compositionally biased stretch (pro residues) spans 479–497 (SPCPSPGPGHTLPPKPPSP). Basic and acidic residues predominate over residues 523-539 (PEDKSQSKRRASNEKES). Residues Ser544, Ser548, and Ser552 each carry the phosphoserine modification. A compositionally biased stretch (pro residues) spans 544-561 (SPAPSPAPSPTPAPPQKE). Thr554 bears the Phosphothreonine mark. Residues 562 to 576 (QPPAETPTDAAVLTS) are compositionally biased toward low complexity. A compositionally biased stretch (pro residues) spans 577 to 586 (PPAPAPPVTP). A coiled-coil region spans residues 593 to 721 (TTDREEATRL…LEEIMKRTRK (129 aa)). Basic and acidic residues predominate over residues 594 to 735 (TDREEATRLL…ETKQKQDSKE (142 aa)). 2 positions are modified to phosphoserine: Ser742 and Ser753. A phosphothreonine mark is found at Thr813 and Thr816. Ser834 is subject to Phosphoserine.

Belongs to the MAP7 family.

It is found in the cytoplasm. The protein localises to the cytoskeleton. Its subcellular location is the spindle. It localises to the microtubule organizing center. The protein resides in the centrosome. It is found in the midbody. Functionally, microtubule-stabilizing protein involved in the control of cell motility and neurite outgrowth. Facilitate microtubule stabilization through the maintenance of acetylated stable microtubules. The chain is MAP7 domain-containing protein 1 (MAP7D1) from Homo sapiens (Human).